Reading from the N-terminus, the 83-residue chain is ATP synthase subunit c, chloroplastic (83 aa).

2 consecutive transmembrane segments (helical) span residues Pro3–Gly23 and Phe57–Ala77.

It belongs to the ATPase C chain family. As to quaternary structure, F-type ATPases have 2 components, F(1) - the catalytic core - and F(0) - the membrane proton channel. F(1) has five subunits: alpha(3), beta(3), gamma(1), delta(1), epsilon(1). F(0) has four main subunits: a(1), b(1), b'(1) and c(10-14). The alpha and beta chains form an alternating ring which encloses part of the gamma chain. F(1) is attached to F(0) by a central stalk formed by the gamma and epsilon chains, while a peripheral stalk is formed by the delta, b and b' chains.

It localises to the plastid. Its subcellular location is the chloroplast thylakoid membrane. Its function is as follows. F(1)F(0) ATP synthase produces ATP from ADP in the presence of a proton or sodium gradient. F-type ATPases consist of two structural domains, F(1) containing the extramembraneous catalytic core and F(0) containing the membrane proton channel, linked together by a central stalk and a peripheral stalk. During catalysis, ATP synthesis in the catalytic domain of F(1) is coupled via a rotary mechanism of the central stalk subunits to proton translocation. In terms of biological role, key component of the F(0) channel; it plays a direct role in translocation across the membrane. A homomeric c-ring of between 10-14 subunits forms the central stalk rotor element with the F(1) delta and epsilon subunits. The sequence is that of ATP synthase subunit c, chloroplastic from Oedogonium cardiacum (Filamentous green alga).